The primary structure comprises 269 residues: uncharacterized protein (269 aa).

8 consecutive transmembrane segments (helical) span residues 9-29 (YIIGLVLALGVSFATLLAHLF), 50-70 (FMLGGYLLVEYLSFLLMIVPL), 82-102 (FSIIHTSIWYNVFVVFTVWAF), 107-127 (LYWTAFFSLCLFSSSFTMYGQ), 147-167 (LVFGKSLWFVVYAFSAALHCT), 173-193 (VFSNVFIWFFAAMYLVPILGF), 200-220 (LVSAYLFLSIGIGQMFIHLFA), and 224-244 (IFAFIIAGLMTLFAALLFLLP).

It is found in the membrane. This is an uncharacterized protein from Schizosaccharomyces pombe (strain 972 / ATCC 24843) (Fission yeast).